Reading from the N-terminus, the 423-residue chain is UDP-N-acetylglucosamine 1-carboxyvinyltransferase 2 (423 aa).

23 to 24 lines the phosphoenolpyruvate pocket; that stretch reads KN. Arginine 95 provides a ligand contact to UDP-N-acetyl-alpha-D-glucosamine. The Proton donor role is filled by cysteine 119. At cysteine 119 the chain carries 2-(S-cysteinyl)pyruvic acid O-phosphothioketal. Aspartate 306 and isoleucine 328 together coordinate UDP-N-acetyl-alpha-D-glucosamine.

The protein belongs to the EPSP synthase family. MurA subfamily.

The protein localises to the cytoplasm. It catalyses the reaction phosphoenolpyruvate + UDP-N-acetyl-alpha-D-glucosamine = UDP-N-acetyl-3-O-(1-carboxyvinyl)-alpha-D-glucosamine + phosphate. It functions in the pathway cell wall biogenesis; peptidoglycan biosynthesis. In terms of biological role, cell wall formation. Adds enolpyruvyl to UDP-N-acetylglucosamine. The polypeptide is UDP-N-acetylglucosamine 1-carboxyvinyltransferase 2 (Symbiobacterium thermophilum (strain DSM 24528 / JCM 14929 / IAM 14863 / T)).